A 309-amino-acid polypeptide reads, in one-letter code: Olfactory receptor 14A16 (309 aa).

The Extracellular segment spans residues 1-23 (MANLTIVTEFILMGFSTNKNMCI). A glycan (N-linked (GlcNAc...) asparagine) is linked at Asn3. A helical transmembrane segment spans residues 24 to 44 (LHSILFLLIYLCALMGNVLII). Topologically, residues 45 to 52 (MITTLDHH) are cytoplasmic. The helical transmembrane segment at 53–73 (LHTPVYFFLKNLSFLDLCLIS) threads the bilayer. Residues 74 to 97 (VTAPKSIANSLIHNNSISFLGCVS) lie on the Extracellular side of the membrane. Asn87 is a glycosylation site (N-linked (GlcNAc...) asparagine). Cys95 and Cys187 are joined by a disulfide. Residues 98-118 (QVFLLLSSASAELLLLTVMSF) traverse the membrane as a helical segment. Residues 119 to 131 (DRYTAICHPLHYD) are Cytoplasmic-facing. The helical transmembrane segment at 132–152 (VIMDRSTCVQRATVSWLYGGL) threads the bilayer. The Extracellular segment spans residues 153–194 (IAVMHTAGTFSLSYCGSNMVHQFFCDIPQLLAISCSENLIRE). The helical transmembrane segment at 195 to 215 (IALILINVVLDFCCFIVIIIT) threads the bilayer. The Cytoplasmic portion of the chain corresponds to 216 to 235 (YVHVFSTVKKIPSTEGQSKA). Residues 236–255 (YSICLPHLLVVLFLSTGFIA) traverse the membrane as a helical segment. Topologically, residues 256-268 (YLKPASESPSILD) are extracellular. The helical transmembrane segment at 269–289 (AVISVFYTMLPPTFNPIIYSL) threads the bilayer. The Cytoplasmic portion of the chain corresponds to 290-309 (RNKAIKVALGMLIKGKLTKK).

This sequence belongs to the G-protein coupled receptor 1 family.

It is found in the cell membrane. Odorant receptor. The polypeptide is Olfactory receptor 14A16 (OR14A16) (Homo sapiens (Human)).